Consider the following 180-residue polypeptide: N-terminal acetyltransferase B complex catalytic subunit naa20 (180 aa).

Residues 2–156 form the N-acetyltransferase domain; it reads TDTRKFKATD…DSFDMRKPLS (155 aa).

This sequence belongs to the acetyltransferase family. In terms of assembly, component of the N-terminal acetyltransferase B (NatB) complex.

It is found in the cytoplasm. It localises to the nucleus. The catalysed reaction is N-terminal L-methionyl-L-asparaginyl-[protein] + acetyl-CoA = N-terminal N(alpha)-acetyl-L-methionyl-L-asparaginyl-[protein] + CoA + H(+). It catalyses the reaction N-terminal L-methionyl-L-glutaminyl-[protein] + acetyl-CoA = N-terminal N(alpha)-acetyl-L-methionyl-L-glutaminyl-[protein] + CoA + H(+). The enzyme catalyses N-terminal L-methionyl-L-aspartyl-[protein] + acetyl-CoA = N-terminal N(alpha)-acetyl-L-methionyl-L-aspartyl-[protein] + CoA + H(+). It carries out the reaction N-terminal L-methionyl-L-glutamyl-[protein] + acetyl-CoA = N-terminal N(alpha)-acetyl-L-methionyl-L-glutamyl-[protein] + CoA + H(+). Functionally, catalytic subunit of the NatB N-terminal acetyltransferase, which catalyzes acetylation of the amino-terminal methionine residues of all proteins beginning with Met-Asp or Met-Glu and of some proteins beginning with Met-Asn, Met-Gln or Met-Met. In Schizosaccharomyces pombe (strain 972 / ATCC 24843) (Fission yeast), this protein is N-terminal acetyltransferase B complex catalytic subunit naa20 (naa20).